The primary structure comprises 51 residues: UPF0391 membrane protein Mbur_2216 (51 aa).

The next 2 membrane-spanning stretches (helical) occupy residues 1–21 (MADLIGLAIVFLIFALVAYVL) and 31–51 (MTIAKWLVIIFIVLAIITILL).

This sequence belongs to the UPF0391 family.

The protein localises to the cell membrane. This Methanococcoides burtonii (strain DSM 6242 / NBRC 107633 / OCM 468 / ACE-M) protein is UPF0391 membrane protein Mbur_2216.